Here is an 89-residue protein sequence, read N- to C-terminus: Arminin 7591 (89 aa).

Positions methionine 1 to serine 18 are cleaved as a signal peptide. A propeptide spanning residues lysine 19–alanine 58 is cleaved from the precursor. Leucine 86 is modified (leucine amide).

The protein belongs to the arminin family. As to expression, expressed in entodermal epithelium along the body column.

Its subcellular location is the secreted. It localises to the target cell membrane. In terms of biological role, antimicrobial peptide with a broad-spectrum antimicrobial activity. Keeps its antibacterial activity under a wide range of salt concentrations that mimic physiological conditions of human blood, which is surprising, since Hydra is an obligate freshwater animal with nearly no salt tolerance. Does not affect red blood cells. The protein is Arminin 7591 of Hydra vulgaris (Hydra).